The primary structure comprises 409 residues: MTQTNFRSGPDVNGLFGSFGGRYVAETLMPLVLDLNREYEAAKADPEFAKEMAYFQRDYVGRPNPLYFAERLTEFCDGAKIYFKREELNHTGAHKINNCIGQVLLAKRMGKKRLIAETGAGMHGVATATVAARFGLPCVIYMGATDIERQQANVFRMKLLGAEIVPVTSGTGTLKDAMNEALRDWVTNVDDTFYLIGTVAGPHPYPAMVRDFQAIIGKETKEQMQEKEGRLPDSLIACVGGGSNAMGLFHPFLDDASVEIIGVEAGGHGVDTDKHAASLNGGVPGVLHGNRTYLLQDGDGQITDPHSISAGLDYPGIGPEHAFLHEVKRVEYVSITDDEALDAFHQCCLLEGIIPALETAHALAEAMKRATNLRDDHLMVVCLSGRGDKDMQTVMNHMAAAEKTQEKLV.

K95 carries the N6-(pyridoxal phosphate)lysine modification.

This sequence belongs to the TrpB family. As to quaternary structure, tetramer of two alpha and two beta chains. Requires pyridoxal 5'-phosphate as cofactor.

It carries out the reaction (1S,2R)-1-C-(indol-3-yl)glycerol 3-phosphate + L-serine = D-glyceraldehyde 3-phosphate + L-tryptophan + H2O. It functions in the pathway amino-acid biosynthesis; L-tryptophan biosynthesis; L-tryptophan from chorismate: step 5/5. Functionally, the beta subunit is responsible for the synthesis of L-tryptophan from indole and L-serine. The chain is Tryptophan synthase beta chain from Pseudomonas savastanoi pv. phaseolicola (Pseudomonas syringae pv. phaseolicola).